Reading from the N-terminus, the 776-residue chain is Rho guanine nucleotide exchange factor 6 (776 aa).

In terms of domain architecture, Calponin-homology (CH) spans 1–111 (MNPEEQIVTW…TLLAVNKATE (111 aa)). Residues 115–151 (SERPCGRSSSLSAANTSQTNPQGAVSSTVSGLQRQSK) are disordered. The span at 121–151 (RSSSLSAANTSQTNPQGAVSSTVSGLQRQSK) shows a compositional bias: polar residues. Ser-126 carries the post-translational modification Phosphoserine. Thr-133 is subject to Phosphothreonine. A phosphoserine mark is found at Ser-144 and Ser-150. Residues 160-219 (SHQLIVKARFNFKQTNEDELSVCKGDIIYVTRVEEGGWWEGTLNGRTGWFPSNYVREIKS) enclose the SH3 domain. Ser-225 carries the post-translational modification Phosphoserine. A DH domain is found at 241 to 421 (YYTVVLQNIL…KTLMGQCQDL (181 aa)). A PH domain is found at 443 to 548 (DIKNLGNVIF…WLEQLNRLIR (106 aa)). Position 488 is a phosphoserine (Ser-488). Positions 561–572 (SSSCSAHSSFSS) are enriched in low complexity. The tract at residues 561–581 (SSSCSAHSSFSSTGQPRGPLE) is disordered. Ser-640 and Ser-684 each carry phosphoserine.

Interacts with PAK kinases through the SH3 domain. Interacts with GIT1. Component of cytoplasmic complexes, which also contain PXN, GIT1 and PAK1. Interacts with PARVB. Interacts with BIN2. Identified in a complex with BIN2 and GIT2. Interacts with PARVG; the guanine nucleotide exchange factor activity of ARHGEF6 is essential for PARVG-induced enhancement of cell spreading. In terms of tissue distribution, ubiquitous.

Its subcellular location is the cell projection. The protein resides in the lamellipodium. Acts as a RAC1 guanine nucleotide exchange factor (GEF). In Homo sapiens (Human), this protein is Rho guanine nucleotide exchange factor 6 (ARHGEF6).